The following is a 392-amino-acid chain: Chloramphenicol resistance protein (392 aa).

The next 12 membrane-spanning stretches (helical) occupy residues 6–26, 42–62, 71–91, 100–120, 129–149, 160–180, 205–225, 239–259, 268–288, 294–314, 332–352, and 358–378; these read YLLA…AGLV, TLTS…AALA, LLGF…TTSF, VAAL…AALV, LAVL…GGSL, FWAV…AIPA, LLLA…SFTF, LWIS…VTVA, AQVL…LAML, ALLT…STLI, ATAA…TTLG, and LGPL…AFPF.

The protein belongs to the major facilitator superfamily.

It is found in the cell membrane. In Streptomyces lividans, this protein is Chloramphenicol resistance protein (cmlR).